Here is a 427-residue protein sequence, read N- to C-terminus: L-rhamnose isomerase (427 aa).

3 residues coordinate Mn(2+): histidine 264, aspartate 296, and aspartate 298.

This sequence belongs to the rhamnose isomerase family. Mn(2+) serves as cofactor.

The protein resides in the cytoplasm. It carries out the reaction L-rhamnopyranose = L-rhamnulose. Its pathway is carbohydrate degradation; L-rhamnose degradation; glycerone phosphate from L-rhamnose: step 1/3. Functionally, catalyzes the interconversion of L-rhamnose and L-rhamnulose. This chain is L-rhamnose isomerase, found in Lactiplantibacillus plantarum (strain ATCC BAA-793 / NCIMB 8826 / WCFS1) (Lactobacillus plantarum).